The primary structure comprises 334 residues: D-fructose 1,6-bisphosphatase class 2/sedoheptulose 1,7-bisphosphatase (334 aa).

The Mn(2+) site is built by aspartate 33, glutamate 57, aspartate 85, and glutamate 88. Residues 88 to 90 (EGT), tyrosine 119, 164 to 166 (RAR), and 186 to 188 (DGD) contribute to the substrate site. Mn(2+) is bound at residue glutamate 213.

This sequence belongs to the FBPase class 2 family. As to quaternary structure, homotetramer. Mn(2+) serves as cofactor.

It catalyses the reaction beta-D-fructose 1,6-bisphosphate + H2O = beta-D-fructose 6-phosphate + phosphate. It carries out the reaction D-sedoheptulose 1,7-bisphosphate + H2O = D-sedoheptulose 7-phosphate + phosphate. The protein operates within carbohydrate biosynthesis; Calvin cycle. Functionally, catalyzes the hydrolysis of fructose 1,6-bisphosphate (Fru 1,6-P2) and sedoheptulose 1,7-bisphosphate (Sed 1,7-P2) to fructose 6-phosphate and sedoheptulose 7-phosphate, respectively. The sequence is that of D-fructose 1,6-bisphosphatase class 2/sedoheptulose 1,7-bisphosphatase from Synechococcus sp. (strain CC9902).